Reading from the N-terminus, the 558-residue chain is Atlastin-1 (558 aa).

A disordered region spans residues 1 to 29; sequence MAKSRRDRNSWGGFSEKSSDWSSEEEEPV. An N-terminal hypervariable region (HVR) region spans residues 1-34; the sequence is MAKSRRDRNSWGGFSEKSSDWSSEEEEPVRKAGP. Topologically, residues 1-449 are cytoplasmic; sequence MAKSRRDRNS…NIFHAARTPA (449 aa). Residues S10, S22, and S23 each carry the phosphoserine modification. The GB1/RHD3-type G domain occupies 64-309; the sequence is DKEVVAVSVA…LIPWLLSPES (246 aa). GDP-binding residues include R77, K78, G79, K80, S81, F82, Q148, R217, D218, V276, and N279. GTP contacts are provided by R77, K78, G79, K80, S81, and F82. S81 provides a ligand contact to Mg(2+). GTP is bound by residues R217, D218, and V276. Positions 347 to 438 are 3HB (three-helix bundle) domain; it reads MLQATAEANN…YIQYIKHNDS (92 aa). K395 carries the N6-acetyllysine modification. Residues 412–439 adopt a coiled-coil conformation; it reads EFSRRYLQQLESEIDELYIQYIKHNDSK. Positions 439–447 are linker; the sequence is KNIFHAART. Residues 450 to 470 traverse the membrane as a helical segment; the sequence is TLFVVIFITYVIAGVTGFIGL. D471 is a topological domain (lumenal). Residues 472–492 form a helical membrane-spanning segment; it reads IIASLCNMIMGLTLITLCTWA. Residues 493-558 are Cytoplasmic-facing; the sequence is YIRYSGEYRE…PTEQPEKKKI (66 aa). The tract at residues 521 to 558 is autoinhibitory domain; that stretch reads NEALYKLYSAAATHRHLYQQAFPAPKSEPTEQPEKKKI.

The protein belongs to the TRAFAC class dynamin-like GTPase superfamily. GB1/RHD3 GTPase family. GB1 subfamily. As to quaternary structure, monomeric and homodimeric. The homodimer, transiently formed by two molecules on opposing membranes, is the active form mediating ER membrane fusion. Interacts with REEP1, REEP5, RTN3 and RTN4 (via the transmembrane region); these proteins are involved in endoplasmic reticulum tubular network organization. Interacts with ZFYVE27; both proteins are involved in endoplasmic reticulum tubular network organization. Interacts with ARL6IP1; both proteins are involved in endoplasmic reticulum tubular network organization. Interacts with SPAST; the interaction is direct, could recruit SPAST to Golgi membranes. Interacts (via N-terminal region) with MAP4K4 (via CNH regulatory domain). May interact with TMED2. Interacts with CPT1C. Post-translationally, phosphorylated. Phosphorylation, by different kinases, of the N-terminal hypervariable region (HVR) regulates the ATL1-mediated membrane tethering step. Detected in brain where it is abundant in lamina V of the cerebral cortex. Also expressed within the hippocampus, mainly in pyramidal neurons in CA1 and CA3. Weakly expressed in the striatum and more robustly in amygdala and several thalamic nuclei. Also detected in several mesopontine nuclei (at protein level).

It is found in the endoplasmic reticulum membrane. Its subcellular location is the golgi apparatus membrane. The protein localises to the cell projection. It localises to the axon. The catalysed reaction is GTP + H2O = GDP + phosphate + H(+). Functionally, atlastin-1 (ATL1) is a membrane-anchored GTPase that mediates the GTP-dependent fusion of endoplasmic reticulum (ER) membranes, maintaining the continuous ER network. It facilitates the formation of three-way junctions where ER tubules intersect. Two atlastin-1 on neighboring ER tubules bind GTP and form loose homodimers through the GB1/RHD3-type G domains and 3HB regions. Upon GTP hydrolysis, the 3HB regions tighten, pulling the membranes together to drive their fusion. After fusion, the homodimer disassembles upon release of inorganic phosphate (Pi). Subsequently, GDP dissociates, resetting the monomers to a conformation ready for a new fusion cycle. May also regulate more or less directly Golgi biogenesis. Indirectly regulates axonal development. The sequence is that of Atlastin-1 from Rattus norvegicus (Rat).